The following is a 182-amino-acid chain: uncharacterized protein (182 aa).

This sequence to M.tuberculosis Rv2313c.

This is an uncharacterized protein from Escherichia coli (strain K12).